The primary structure comprises 90 residues: Small ribosomal subunit protein uS17 (90 aa).

Belongs to the universal ribosomal protein uS17 family. Part of the 30S ribosomal subunit.

Functionally, one of the primary rRNA binding proteins, it binds specifically to the 5'-end of 16S ribosomal RNA. The chain is Small ribosomal subunit protein uS17 from Burkholderia ambifaria (strain ATCC BAA-244 / DSM 16087 / CCUG 44356 / LMG 19182 / AMMD) (Burkholderia cepacia (strain AMMD)).